Reading from the N-terminus, the 781-residue chain is Dynamin-related protein dnm1 (781 aa).

The 306-residue stretch at 23–328 (FLDLPSIVVV…LVSHIRERLP (306 aa)) folds into the Dynamin-type G domain. Positions 33 to 40 (GSQSCGKS) are G1 motif. A GTP-binding site is contributed by 33–40 (GSQSCGKS). Residues 59 to 61 (VTR) are G2 motif. A disordered region spans residues 76 to 103 (KNNHDEESTSDNNSEETSAAGETGSLEG). The segment at 170-173 (DLPG) is G3 motif. GTP-binding positions include 170-174 (DLPGL) and 239-242 (TKLD). Positions 239 to 242 (TKLD) are G4 motif. The tract at residues 269 to 272 (VNRS) is G5 motif. In terms of domain architecture, GED spans 694 to 781 (VDLIKELITS…QANKIISTVF (88 aa)).

The protein belongs to the TRAFAC class dynamin-like GTPase superfamily. Dynamin/Fzo/YdjA family.

The protein resides in the cytoplasm. Its subcellular location is the mitochondrion outer membrane. It catalyses the reaction GTP + H2O = GDP + phosphate + H(+). Its function is as follows. Microtubule-associated force-producing protein that mediates mitochondrial fission during interphasic growth and at cell division. Fission of mitochondria occurs in many cell types and constitutes an important step in mitochondria morphology, which is balanced between fusion and fission. With vps1, acts redundantly in peroxisome biogenesis, which is under cell cycle control. The sequence is that of Dynamin-related protein dnm1 (dnm1) from Schizosaccharomyces pombe (strain 972 / ATCC 24843) (Fission yeast).